The chain runs to 360 residues: Mannose-1-phosphate guanylyltransferase catalytic subunit beta (360 aa).

The segment at 2-222 is substrate-binding domain; that stretch reads KALILVGGYG…QGFWMDIGQP (221 aa). GDP-alpha-D-mannose is bound at residue D110. D110 lines the Mg(2+) pocket. Residue K162 is part of the active site. Residue D218 coordinates GDP-alpha-D-mannose. Residue D218 coordinates Mg(2+). The hexapeptide repeat domain stretch occupies residues 245 to 360; the sequence is HVGPGFIGNV…ESVPEPRIIM (116 aa).

Belongs to the transferase hexapeptide repeat family. In terms of assembly, component of the GMPPA-GMPPB mannose-1-phosphate guanylyltransferase complex composed of 4 gmppa subunits and 8 gmppb subunits; the complex is organized into three layers, a central layer made up of 2 gmppa dimers sandwiched between two layers each made up of 2 gmppb dimers. Catalytic activity of gmppb is reduced when part of the complex and binding of GDP-alpha-D-Mannose by gmppa induces allosteric feedback inhibition of gmppb. The cofactor is Mg(2+).

It catalyses the reaction alpha-D-mannose 1-phosphate + GTP + H(+) = GDP-alpha-D-mannose + diphosphate. It functions in the pathway nucleotide-sugar biosynthesis; GDP-alpha-D-mannose biosynthesis; GDP-alpha-D-mannose from alpha-D-mannose 1-phosphate (GTP route): step 1/1. With respect to regulation, enzyme activity is reduced by incorporation into the GMPPA-GMPPB mannose-1-phosphate guanylyltransferase complex. Allosterically inhibited, when part of the GMPPA-GMPPB complex, by GDP-alpha-D-mannose binding to GMPPA. Catalytic subunit of the GMPPA-GMPPB mannose-1-phosphate guanylyltransferase complex. Catalyzes the formation of GDP-mannose, an essential precursor of glycan moieties of glycoproteins and glycolipids. Can catalyze the reverse reaction in vitro. Together with GMPPA regulates GDP-alpha-D-mannose levels. This chain is Mannose-1-phosphate guanylyltransferase catalytic subunit beta (gmppb), found in Xenopus tropicalis (Western clawed frog).